The chain runs to 124 residues: MRDSKDRFIIRKNRVRAKIAKLSGGGYPRLSVFKSNRHIYAQVIENIGSNKSNTIAAASTLDRDIFTELKYYKCNIQYAKKVGQLLAERANSKGITSVVFDRGGYKYHGVIKALADGAREKLNF.

It belongs to the universal ribosomal protein uL18 family. Part of the 50S ribosomal subunit; part of the 5S rRNA/L5/L18/L25 subcomplex. Contacts the 5S and 23S rRNAs.

Functionally, this is one of the proteins that bind and probably mediate the attachment of the 5S RNA into the large ribosomal subunit, where it forms part of the central protuberance. This chain is Large ribosomal subunit protein uL18, found in Orientia tsutsugamushi (strain Ikeda) (Rickettsia tsutsugamushi).